The following is a 123-amino-acid chain: Defensin beta 118 (123 aa).

The signal sequence occupies residues 1-19 (MKLLLLALPILVLLPQVIP). 3 cysteine pairs are disulfide-bonded: cysteine 27–cysteine 54, cysteine 34–cysteine 48, and cysteine 38–cysteine 55. The propeptide occupies 65–123 (LPTTSPTPLSDSTPGIIDNILTIRFTTDYFEISSKKDMVEESEAGQGTQTSPPNVHHTS). The tract at residues 100 to 123 (KDMVEESEAGQGTQTSPPNVHHTS) is disordered. The segment covering 109–123 (GQGTQTSPPNVHHTS) has biased composition (polar residues).

It belongs to the beta-defensin family. In terms of processing, the three-dimensional structure formed by the three intramolecular disulfide bridges is indispensable for antimicrobial activity. As to expression, high-level and epididymis-specific expression. Most abundant in the epithelium of the caput and is also present in the lumen and bound to sperm.

It localises to the secreted. Functionally, host defense peptide that exhibits antimicrobial activity against both Gram-negative bacteria, such as E.coli and S.typhimurium, and Gram-positive bacteria, such as S.aureus and B.subtilis. Inhibits cell adhesion of E.coli on intestinal epithelial enterocytes. Causes rapid permeabilization of both the outer and inner membrane of E.coli, leading to morphological alterations on the bacterial surface. Binds to bacterial lipopolysaccharides (LPS) with high affinity, and may thereby be involved in immunoregulation through LPS neutralization. May contribute to epididymal innate immunity and protect the sperm against attack by microorganisms. In Macaca mulatta (Rhesus macaque), this protein is Defensin beta 118 (DEFB118).